A 947-amino-acid chain; its full sequence is Protocadherin alpha-4 (947 aa).

The N-terminal stretch at 1 to 29 (MEFSWGSGQESRRLLLLLLLLAAWEAGNG) is a signal peptide. 6 Cadherin domains span residues 30–133 (QLHY…PPVF), 134–242 (PATQ…APAF), 243–350 (DRTI…VPDL), 351–455 (EFKS…APAF), 456–565 (AQPE…APAL), and 588–678 (GHVV…APKA). Residues 30–697 (QLHYSVSEEA…GPDAALVDVN (668 aa)) lie on the Extracellular side of the membrane. An intrachain disulfide couples C96 to C102. 3 N-linked (GlcNAc...) asparagine glycosylation sites follow: N139, N257, and N265. An N-linked (GlcNAc...) asparagine glycan is attached at N548. A helical membrane pass occupies residues 698-718 (VYLIIAICAVSSLLVLTLLLY). The Cytoplasmic segment spans residues 719–947 (TALRCSALPT…GNSTTDNSDQ (229 aa)). PXXP repeat units lie at residues 734-737 (PGKP), 774-777 (PSLP), 796-799 (PRQP), 829-832 (PGGP), 870-873 (PGNP), and 888-891 (PGSP). Residues 734-891 (PGKPTLVCSS…PDKFIIPGSP (158 aa)) are 6 X 4 AA repeats of P-X-X-P. A required for interaction with FYN region spans residues 738-947 (TLVCSSAVGS…GNSTTDNSDQ (210 aa)). 3 disordered regions span residues 754 to 805 (RRPR…DWRY), 828 to 853 (GPGG…EVSP), and 868 to 947 (YGPG…NSDQ). Residues 906 to 920 (DKSDFITFGKKEETK) are compositionally biased toward basic and acidic residues.

Forms homodimers in trans (molecules expressed by two different cells). Forms promiscuous heterodimers in cis (at the plasma membrane of the same cell) with other protocadherins. Interacts with FYN.

The protein localises to the cell membrane. Calcium-dependent cell-adhesion protein involved in cells self-recognition and non-self discrimination. Thereby, it is involved in the establishment and maintenance of specific neuronal connections in the brain. The polypeptide is Protocadherin alpha-4 (Homo sapiens (Human)).